Reading from the N-terminus, the 826-residue chain is Zinc phosphodiesterase ELAC protein 2 (826 aa).

A mitochondrion-targeting transit peptide spans 1 to 16; it reads MWALCSLLRSATGRTM. Residues 15-27 are compositionally biased toward polar residues; the sequence is TMSQGRTISQGSA. 2 disordered regions span residues 15 to 53 and 187 to 231; these read TMSQGRTISQGSARRQRPPKDPLRHLRTREKRGPSGSSG and SEQR…VSQR. Ser199, Ser208, Ser212, Ser229, Ser618, and Ser736 each carry phosphoserine. Basic and acidic residues predominate over residues 208–224; it reads SPERSSDSESNESEPHL. The tract at residues 798–826 is disordered; it reads ALTDDLEDGEPQQKRAHTEEPQSKKVRAQ. Basic and acidic residues predominate over residues 808-820; the sequence is PQQKRAHTEEPQS.

This sequence belongs to the RNase Z family. In terms of assembly, homodimer. Interacts with PTCD1. Zn(2+) is required as a cofactor.

Its subcellular location is the mitochondrion. It is found in the mitochondrion matrix. It localises to the mitochondrion nucleoid. The protein localises to the nucleus. It catalyses the reaction Endonucleolytic cleavage of RNA, removing extra 3' nucleotides from tRNA precursor, generating 3' termini of tRNAs. A 3'-hydroxy group is left at the tRNA terminus and a 5'-phosphoryl group is left at the trailer molecule.. Its function is as follows. Zinc phosphodiesterase, which displays mitochondrial tRNA 3'-processing endonuclease activity. Involved in tRNA maturation, by removing a 3'-trailer from precursor tRNA. Associates with mitochondrial DNA complexes at the nucleoids to initiate RNA processing and ribosome assembly. This Macaca fascicularis (Crab-eating macaque) protein is Zinc phosphodiesterase ELAC protein 2 (ELAC2).